The chain runs to 199 residues: Charged multivesicular body protein 1b (199 aa).

Coiled-coil stretches lie at residues 15 to 42 (AKELHRNAKKCEKEEKTEKAKIKKAIQK) and 178 to 199 (TSVASTEQDELSQRLARLRDQV). The segment at 167-199 (ELPQGQTGSVGTSVASTEQDELSQRLARLRDQV) is disordered. The span at 170 to 183 (QGQTGSVGTSVAST) shows a compositional bias: polar residues. Residues 186–196 (DELSQRLARLR) carry the MIT-interacting motif motif.

Belongs to the SNF7 family.

Its subcellular location is the cytoplasm. It localises to the cytosol. The protein localises to the endosome. It is found in the late endosome membrane. Its function is as follows. Probable peripherally associated component of the endosomal sorting required for transport complex III (ESCRT-III) which is involved in multivesicular bodies (MVBs) formation and sorting of endosomal cargo proteins into MVBs. MVBs contain intraluminal vesicles (ILVs) that are generated by invagination and scission from the limiting membrane of the endosome and mostly are delivered to lysosomes enabling degradation of membrane proteins, such as stimulated growth factor receptors, lysosomal enzymes and lipids. The polypeptide is Charged multivesicular body protein 1b (chmp1b) (Xenopus tropicalis (Western clawed frog)).